Here is a 716-residue protein sequence, read N- to C-terminus: Fatty acid oxidation complex subunit alpha (716 aa).

An enoyl-CoA hydratase/isomerase region spans residues 1 to 189 (MIYQSPTIQV…KVGAIDAVVA (189 aa)). Asp-296 is a binding site for substrate. The tract at residues 311–716 (QAVNSAAVLG…AATNGSYYPA (406 aa)) is 3-hydroxyacyl-CoA dehydrogenase. Residues Met-324, Asp-343, 400-402 (VVE), Lys-407, and Ser-429 each bind NAD(+). His-450 serves as the catalytic For 3-hydroxyacyl-CoA dehydrogenase activity. Asn-453 lines the NAD(+) pocket. The substrate site is built by Asn-500 and Tyr-660.

The protein in the N-terminal section; belongs to the enoyl-CoA hydratase/isomerase family. In the C-terminal section; belongs to the 3-hydroxyacyl-CoA dehydrogenase family. As to quaternary structure, heterotetramer of two alpha chains (FadB) and two beta chains (FadA).

The enzyme catalyses a (3S)-3-hydroxyacyl-CoA + NAD(+) = a 3-oxoacyl-CoA + NADH + H(+). It carries out the reaction a (3S)-3-hydroxyacyl-CoA = a (2E)-enoyl-CoA + H2O. The catalysed reaction is a 4-saturated-(3S)-3-hydroxyacyl-CoA = a (3E)-enoyl-CoA + H2O. It catalyses the reaction (3S)-3-hydroxybutanoyl-CoA = (3R)-3-hydroxybutanoyl-CoA. The enzyme catalyses a (3Z)-enoyl-CoA = a 4-saturated (2E)-enoyl-CoA. It carries out the reaction a (3E)-enoyl-CoA = a 4-saturated (2E)-enoyl-CoA. The protein operates within lipid metabolism; fatty acid beta-oxidation. Involved in the aerobic and anaerobic degradation of long-chain fatty acids via beta-oxidation cycle. Catalyzes the formation of 3-oxoacyl-CoA from enoyl-CoA via L-3-hydroxyacyl-CoA. It can also use D-3-hydroxyacyl-CoA and cis-3-enoyl-CoA as substrate. This is Fatty acid oxidation complex subunit alpha from Shewanella loihica (strain ATCC BAA-1088 / PV-4).